A 281-amino-acid chain; its full sequence is Complement C1q tumor necrosis factor-related protein 1 (281 aa).

The N-terminal stretch at 1–25 (MGSCAQGFMLGCCLLLAITWGPILS) is a signal peptide. The interval 35–68 (QEWEETEELPSPLDPVTRPEETREKYSPRQGEDL) is disordered. The segment covering 51 to 66 (TRPEETREKYSPRQGE) has biased composition (basic and acidic residues). The N-linked (GlcNAc...) asparagine glycan is linked to Asn-93. Residues 99–140 (GEKGDRGDRGLQGKYGKIGSTGPRGHVGPKGQKGSIGAPGNH) enclose the Collagen-like domain. Positions 107-136 (RGLQGKYGKIGSTGPRGHVGPKGQKGSIGA) are disordered. The region spanning 141–281 (CKSQYAAFSV…GYLVKPASEP (141 aa)) is the C1q domain.

It localises to the secreted. This Mus musculus (Mouse) protein is Complement C1q tumor necrosis factor-related protein 1 (C1qtnf1).